Reading from the N-terminus, the 115-residue chain is Large ribosomal subunit protein bL19 (115 aa).

The protein belongs to the bacterial ribosomal protein bL19 family.

This protein is located at the 30S-50S ribosomal subunit interface and may play a role in the structure and function of the aminoacyl-tRNA binding site. This is Large ribosomal subunit protein bL19 from Escherichia coli O139:H28 (strain E24377A / ETEC).